The following is a 195-amino-acid chain: MKEIVIASNNQGKINDFKVIFPDYHVIGISELIPDFDVEETGSTFEENAILKSEAAAKALNKTVIADDSGLEVFALNGEPGIYSARYAGENKSDEANIEKLLNKLGNTTDRRAQFVCVISMSGPDMETKVFKGTVSGEIADGKYGENGFGYDPIFYVPKLDKTMAQLSKEQKGQISHRRNAINLLQAFLEGEKNV.

Residue 8-13 coordinates substrate; the sequence is SNNQGK. Residues Glu-39 and Asp-68 each coordinate Mg(2+). Asp-68 (proton acceptor) is an active-site residue. Substrate is bound by residues Ser-69, 149-152, Lys-172, and 177-178; these read FGYD and HR.

Belongs to the HAM1 NTPase family. In terms of assembly, homodimer. The cofactor is Mg(2+).

The catalysed reaction is XTP + H2O = XMP + diphosphate + H(+). It catalyses the reaction dITP + H2O = dIMP + diphosphate + H(+). It carries out the reaction ITP + H2O = IMP + diphosphate + H(+). In terms of biological role, pyrophosphatase that catalyzes the hydrolysis of nucleoside triphosphates to their monophosphate derivatives, with a high preference for the non-canonical purine nucleotides XTP (xanthosine triphosphate), dITP (deoxyinosine triphosphate) and ITP. Seems to function as a house-cleaning enzyme that removes non-canonical purine nucleotides from the nucleotide pool, thus preventing their incorporation into DNA/RNA and avoiding chromosomal lesions. The sequence is that of dITP/XTP pyrophosphatase from Staphylococcus aureus (strain Mu50 / ATCC 700699).